The sequence spans 167 residues: Endoribonuclease YbeY (167 aa).

Positions 131, 135, and 141 each coordinate Zn(2+).

This sequence belongs to the endoribonuclease YbeY family. The cofactor is Zn(2+).

Its subcellular location is the cytoplasm. Its function is as follows. Single strand-specific metallo-endoribonuclease involved in late-stage 70S ribosome quality control and in maturation of the 3' terminus of the 16S rRNA. This chain is Endoribonuclease YbeY, found in Rickettsia rickettsii (strain Iowa).